A 447-amino-acid polypeptide reads, in one-letter code: Phosphoglucosamine mutase (447 aa).

The Phosphoserine intermediate role is filled by Ser-101. Ser-101, Asp-242, Asp-244, and Asp-246 together coordinate Mg(2+). Ser-101 carries the post-translational modification Phosphoserine.

It belongs to the phosphohexose mutase family. Requires Mg(2+) as cofactor. In terms of processing, activated by phosphorylation.

It carries out the reaction alpha-D-glucosamine 1-phosphate = D-glucosamine 6-phosphate. Catalyzes the conversion of glucosamine-6-phosphate to glucosamine-1-phosphate. This is Phosphoglucosamine mutase from Xanthobacter autotrophicus (strain ATCC BAA-1158 / Py2).